The primary structure comprises 1196 residues: ATP-dependent helicase/deoxyribonuclease subunit B (1196 aa).

[4Fe-4S] cluster-binding residues include cysteine 823, cysteine 1149, cysteine 1152, and cysteine 1158.

This sequence belongs to the helicase family. AddB/RexB type 2 subfamily. In terms of assembly, heterodimer of AddA and RexB. Requires Mg(2+) as cofactor. [4Fe-4S] cluster is required as a cofactor.

The heterodimer acts as both an ATP-dependent DNA helicase and an ATP-dependent, dual-direction single-stranded exonuclease. Recognizes the chi site generating a DNA molecule suitable for the initiation of homologous recombination. This subunit has 5' -&gt; 3' nuclease activity but not helicase activity. This Enterococcus faecalis (strain ATCC 700802 / V583) protein is ATP-dependent helicase/deoxyribonuclease subunit B.